Reading from the N-terminus, the 921-residue chain is Short transient receptor potential channel 3 (921 aa).

The tract at residues 1–73 is disordered; the sequence is MSTKVRKCKE…PPFSHGPDLS (73 aa). The Cytoplasmic segment spans residues 1 to 459; that stretch reads MSTKVRKCKE…KILRSPFMKF (459 aa). The segment covering 19–31 has biased composition (acidic residues); it reads PEEEEDEGEDEGA. 4 ANK repeats span residues 111–140, 146–175, 177–203, and 232–261; these read AEEERFLDAAEYGNIPVVRKMLEESKTLNV, MGQNALQLAVGNEHLEVTELLLKKENLARI, DALLLAISKGYVRIVEAILNHPGFAAS, and PDITPIILAAHCQKYEVVHMLLMKGARIER. Ca(2+) is bound at residue glutamate 158. A helical transmembrane segment spans residues 460–477; it reads VAHAASFIIFLGLLVFNA. Topologically, residues 478–508 are extracellular; sequence SDRFEGITTLPNITVTDYPKQIFRVKTTQFT. A glycan (N-linked (GlcNAc...) asparagine) is linked at asparagine 489. The helical transmembrane segment at 509 to 527 threads the bilayer; the sequence is WTEMLIMVWVLGMMWSECK. 3 residues coordinate Ca(2+): glutamate 525, glutamate 528, and asparagine 543. Topologically, residues 528–540 are cytoplasmic; it reads ELWLEGPREYILQ. Residues 541 to 562 traverse the membrane as a helical segment; that stretch reads LWNVLDFGMLSIFIAAFTARFL. Over 563-606 the chain is Extracellular; it reads AFLQATKAQQYVDSYVQESDLSEVTLPPEIQYFTYARDKWLPSD. A helical transmembrane segment spans residues 607 to 630; sequence PQIISEGLYAIAVVLSFSRIAYIL. The Cytoplasmic segment spans residues 631–649; sequence PANESFGPLQISLGRTVKD. An ANK 5 repeat occupies 634 to 663; that stretch reads ESFGPLQISLGRTVKDIFKFMVLFIMVFFA. A helical membrane pass occupies residues 650 to 673; that stretch reads IFKFMVLFIMVFFAFMIGMFILYS. Topologically, residues 674 to 713 are extracellular; it reads YYLGAKVNAAFTTVEESFKTLFWSIFGLSEVTSVVLKYDH. Residues 714 to 739 traverse the membrane as a helical segment; sequence KFIENIGYVLYGIYNVTMVVVLLNML. The Cytoplasmic portion of the chain corresponds to 740–921; it reads IAMINSSYQE…KLNPSMLRCE (182 aa). The tract at residues 850-870 is binds to IP3R3; it reads QIMKRLIKRYVLKAQVDKEND. Residues glutamate 871, glutamate 874, glutamate 876, and aspartate 883 each contribute to the Ca(2+) site.

Belongs to the transient receptor (TC 1.A.4) family. STrpC subfamily. TRPC3 sub-subfamily. Homotetramer. Interacts with ITPR1. Interacts with ITPR3. Interacts with MX1. Interacts with RNF24. Interacts with JPH2; the interaction is involved in maintaining Ca(2+) homeostasis in skeletal muscle and is mediated by JPH2 'Ser-165' phosphorylation. In terms of assembly, interacts with isoform short of TRPC1. As to expression, expressed predominantly in brain and at much lower levels in ovary, colon, small intestine, lung, prostate, placenta and testis.

The protein localises to the cell membrane. It carries out the reaction Ca(2+)(in) = Ca(2+)(out). Activated by diacylglycerol (DAG) in a membrane-delimited fashion, independently of protein kinase C. Activated by inositol 1,4,5-triphosphate receptors (ITPR) with bound IP3. May be activated by internal calcium store depletion. Inhibited by intracellular Ca(2+). Forms a receptor-activated non-selective calcium permeant cation channel. Functionally, forms a receptor-activated non-selective calcium permeant cation channel. May be operated by a phosphatidylinositol second messenger system activated by receptor tyrosine kinases or G-protein coupled receptors. This is Short transient receptor potential channel 3 (TRPC3) from Homo sapiens (Human).